Reading from the N-terminus, the 1934-residue chain is Pyruvate dehydrogenase [NADP(+)] (1934 aa).

4Fe-4S ferredoxin-type domains are found at residues 710–739 (SIPI…PFLL) and 767–796 (YRIQ…MEGL). 8 residues coordinate [4Fe-4S] cluster: cysteine 719, cysteine 722, cysteine 725, cysteine 729, cysteine 776, cysteine 779, cysteine 782, and cysteine 786. The Flavodoxin-like domain maps to 1288 to 1438 (MHVLYGTETG…ELIEWLPDYL (151 aa)). The region spanning 1501 to 1759 (PNSVLLPVIE…NIKASAFNLP (259 aa)) is the FAD-binding FR-type domain. Residues 1542–1553 (YCLGDSLALYGQ) and 1685–1695 (IKSRSYSIASC) contribute to the FAD site.

It in the N-terminal section; belongs to the pyruvate:ferredoxin/flavodoxin oxidoreductase family. As to quaternary structure, homodimer. FAD serves as cofactor. Requires FMN as cofactor. It depends on thiamine diphosphate as a cofactor.

It catalyses the reaction pyruvate + NADP(+) + CoA = acetyl-CoA + CO2 + NADPH. May have an important role in respiratory metabolism. Cryptosporidium have a relic mitochondrion with no function in energy metabolism so it is not known if PFOR has a function. The protein is Pyruvate dehydrogenase [NADP(+)] (PFOR) of Cryptosporidium parvum.